The following is a 181-amino-acid chain: Small ribosomal subunit protein uS4 (181 aa).

Residues 108-172 (RRLQTQVYRR…SPLVSDIHSE (65 aa)) enclose the S4 RNA-binding domain.

The protein belongs to the universal ribosomal protein uS4 family. As to quaternary structure, part of the 30S ribosomal subunit. Contacts protein S5. The interaction surface between S4 and S5 is involved in control of translational fidelity.

Its function is as follows. One of the primary rRNA binding proteins, it binds directly to 16S rRNA where it nucleates assembly of the body of the 30S subunit. With S5 and S12 plays an important role in translational accuracy. The sequence is that of Small ribosomal subunit protein uS4 from Methanospirillum hungatei JF-1 (strain ATCC 27890 / DSM 864 / NBRC 100397 / JF-1).